The sequence spans 522 residues: Putative aldehyde dehydrogenase-like protein C21C3 (522 aa).

The Proton acceptor role is filled by Glu239. Cys273 acts as the Nucleophile in catalysis.

This sequence belongs to the aldehyde dehydrogenase family.

The protein localises to the cytoplasm. It localises to the nucleus. The polypeptide is Putative aldehyde dehydrogenase-like protein C21C3 (Schizosaccharomyces pombe (strain 972 / ATCC 24843) (Fission yeast)).